A 244-amino-acid chain; its full sequence is Lipid A 1-phosphatase (244 aa).

Helical transmembrane passes span 28-48 (LFVTLNAVILSMLLFDAPIGA), 60-80 (ELLTGFGDSAWLIYTSILLFF), 98-118 (ALYVSWIGAYLFFTVVFSGLL), 154-174 (FPSGHSTTVGAFFAAFALLFP), 178-198 (VAFIACAIWLGMTRVMVGAHY), and 201-221 (DVIAGLAFGAWFSLLTAIVFA).

It belongs to the lipid A LpxE 1-phosphatase family.

It is found in the cell inner membrane. It functions in the pathway bacterial outer membrane biogenesis; LPS lipid A biosynthesis. Its function is as follows. Removes the 1-phosphate group from (tetraacyl) lipid A species, has no requirement for the Kdo(2) moiety of lipid A. Has no 4'-phosphatase activity. Reduces sensitivity of S.meliloti strain 1021 to the cationic antimicrobial peptide (CAMP) polymyxin B. The sequence is that of Lipid A 1-phosphatase from Rhizobium johnstonii (strain DSM 114642 / LMG 32736 / 3841) (Rhizobium leguminosarum bv. viciae).